We begin with the raw amino-acid sequence, 88 residues long: UPF0223 protein OB1419 (88 aa).

It belongs to the UPF0223 family.

This is UPF0223 protein OB1419 from Oceanobacillus iheyensis (strain DSM 14371 / CIP 107618 / JCM 11309 / KCTC 3954 / HTE831).